Here is a 271-residue protein sequence, read N- to C-terminus: Formamidopyrimidine-DNA glycosylase (271 aa).

P2 serves as the catalytic Schiff-base intermediate with DNA. Residue E3 is the Proton donor of the active site. K56 (proton donor; for beta-elimination activity) is an active-site residue. DNA-binding residues include H89, R107, and K151. An FPG-type zinc finger spans residues 236-270 (NVYGRAGLQCRQCGTPVRLSRQGQRSTYFCPHCQR). R260 acts as the Proton donor; for delta-elimination activity in catalysis.

Belongs to the FPG family. As to quaternary structure, monomer. Requires Zn(2+) as cofactor.

The enzyme catalyses Hydrolysis of DNA containing ring-opened 7-methylguanine residues, releasing 2,6-diamino-4-hydroxy-5-(N-methyl)formamidopyrimidine.. It catalyses the reaction 2'-deoxyribonucleotide-(2'-deoxyribose 5'-phosphate)-2'-deoxyribonucleotide-DNA = a 3'-end 2'-deoxyribonucleotide-(2,3-dehydro-2,3-deoxyribose 5'-phosphate)-DNA + a 5'-end 5'-phospho-2'-deoxyribonucleoside-DNA + H(+). In terms of biological role, involved in base excision repair of DNA damaged by oxidation or by mutagenic agents. Acts as a DNA glycosylase that recognizes and removes damaged bases. Has a preference for oxidized purines, such as 7,8-dihydro-8-oxoguanine (8-oxoG). Has AP (apurinic/apyrimidinic) lyase activity and introduces nicks in the DNA strand. Cleaves the DNA backbone by beta-delta elimination to generate a single-strand break at the site of the removed base with both 3'- and 5'-phosphates. This chain is Formamidopyrimidine-DNA glycosylase, found in Acidovorax ebreus (strain TPSY) (Diaphorobacter sp. (strain TPSY)).